The primary structure comprises 478 residues: Argininosuccinate lyase (478 aa).

This sequence belongs to the lyase 1 family. Argininosuccinate lyase subfamily.

The protein localises to the cytoplasm. It catalyses the reaction 2-(N(omega)-L-arginino)succinate = fumarate + L-arginine. It functions in the pathway amino-acid biosynthesis; L-arginine biosynthesis; L-arginine from L-ornithine and carbamoyl phosphate: step 3/3. In Rhodospirillum rubrum (strain ATCC 11170 / ATH 1.1.1 / DSM 467 / LMG 4362 / NCIMB 8255 / S1), this protein is Argininosuccinate lyase.